We begin with the raw amino-acid sequence, 161 residues long: 2-C-methyl-D-erythritol 2,4-cyclodiphosphate synthase (161 aa).

2 residues coordinate a divalent metal cation: D11 and H13. Residues 11-13 (DIH) and 37-38 (HS) each bind 4-CDP-2-C-methyl-D-erythritol 2-phosphate. H45 is an a divalent metal cation binding site. 4-CDP-2-C-methyl-D-erythritol 2-phosphate contacts are provided by residues 59 to 61 (DIG), 135 to 138 (TTNE), and R145.

The protein belongs to the IspF family. In terms of assembly, homotrimer. A divalent metal cation serves as cofactor.

The enzyme catalyses 4-CDP-2-C-methyl-D-erythritol 2-phosphate = 2-C-methyl-D-erythritol 2,4-cyclic diphosphate + CMP. It functions in the pathway isoprenoid biosynthesis; isopentenyl diphosphate biosynthesis via DXP pathway; isopentenyl diphosphate from 1-deoxy-D-xylulose 5-phosphate: step 4/6. Involved in the biosynthesis of isopentenyl diphosphate (IPP) and dimethylallyl diphosphate (DMAPP), two major building blocks of isoprenoid compounds. Catalyzes the conversion of 4-diphosphocytidyl-2-C-methyl-D-erythritol 2-phosphate (CDP-ME2P) to 2-C-methyl-D-erythritol 2,4-cyclodiphosphate (ME-CPP) with a corresponding release of cytidine 5-monophosphate (CMP). The sequence is that of 2-C-methyl-D-erythritol 2,4-cyclodiphosphate synthase from Synechocystis sp. (strain ATCC 27184 / PCC 6803 / Kazusa).